The chain runs to 149 residues: Large ribosomal subunit protein uL13 (149 aa).

This sequence belongs to the universal ribosomal protein uL13 family. Part of the 50S ribosomal subunit.

This protein is one of the early assembly proteins of the 50S ribosomal subunit, although it is not seen to bind rRNA by itself. It is important during the early stages of 50S assembly. The sequence is that of Large ribosomal subunit protein uL13 from Borrelia turicatae (strain 91E135).